A 468-amino-acid chain; its full sequence is 3-isopropylmalate dehydratase large subunit (468 aa).

[4Fe-4S] cluster contacts are provided by C346, C406, and C409.

Belongs to the aconitase/IPM isomerase family. LeuC type 1 subfamily. In terms of assembly, heterodimer of LeuC and LeuD. Requires [4Fe-4S] cluster as cofactor.

It catalyses the reaction (2R,3S)-3-isopropylmalate = (2S)-2-isopropylmalate. It functions in the pathway amino-acid biosynthesis; L-leucine biosynthesis; L-leucine from 3-methyl-2-oxobutanoate: step 2/4. Its function is as follows. Catalyzes the isomerization between 2-isopropylmalate and 3-isopropylmalate, via the formation of 2-isopropylmaleate. This chain is 3-isopropylmalate dehydratase large subunit, found in Pseudoalteromonas atlantica (strain T6c / ATCC BAA-1087).